The chain runs to 241 residues: Putative inactive serine protease 58 (241 aa).

The N-terminal stretch at 1-17 (MKLAFLCILSTLLRTFA) is a signal peptide. A Peptidase S1 domain is found at 18-239 (YNPDHIAGTT…YLPWIEDTMK (222 aa)). Cys41 and Cys57 are oxidised to a cystine. Active-site charge relay system residues include His56 and Asp101. 3 disulfides stabilise this stretch: Cys133–Cys201, Cys165–Cys180, and Cys191–Cys215. Asn156 is a glycosylation site (N-linked (GlcNAc...) asparagine).

The protein belongs to the peptidase S1 family.

It is found in the secreted. It catalyses the reaction Preferential cleavage: Arg-|-Xaa, Lys-|-Xaa.. The polypeptide is Putative inactive serine protease 58 (Prss58) (Mus musculus (Mouse)).